The sequence spans 490 residues: Glutamyl-tRNA(Gln) amidotransferase subunit A (490 aa).

Catalysis depends on charge relay system residues lysine 81 and serine 156. Serine 180 functions as the Acyl-ester intermediate in the catalytic mechanism.

The protein belongs to the amidase family. GatA subfamily. Heterotrimer of A, B and C subunits.

It carries out the reaction L-glutamyl-tRNA(Gln) + L-glutamine + ATP + H2O = L-glutaminyl-tRNA(Gln) + L-glutamate + ADP + phosphate + H(+). Allows the formation of correctly charged Gln-tRNA(Gln) through the transamidation of misacylated Glu-tRNA(Gln) in organisms which lack glutaminyl-tRNA synthetase. The reaction takes place in the presence of glutamine and ATP through an activated gamma-phospho-Glu-tRNA(Gln). The chain is Glutamyl-tRNA(Gln) amidotransferase subunit A from Nocardia farcinica (strain IFM 10152).